The sequence spans 825 residues: NT-3 growth factor receptor (825 aa).

The signal sequence occupies residues M1 to A31. 2 disulfides stabilise this stretch: C32–C38 and C36–C45. The Extracellular portion of the chain corresponds to C32–T429. 3 N-linked (GlcNAc...) asparagine glycosylation sites follow: N68, N72, and N79. 2 LRR repeats span residues G104–K125 and H128–T149. Residues N133 and N163 are each glycosylated (N-linked (GlcNAc...) asparagine). The LRRCT domain maps to N160–L209. Cystine bridges form between C164–C189 and C166–C207. N-linked (GlcNAc...) asparagine glycosylation is found at N203, N218, N232, N259, N267, N272, and N294. Ig-like C2-type domains lie at P210–T300 and S309–N382. A disulfide bridge connects residues C231 and C284. The cysteines at positions 320 and 362 are disulfide-linked. N-linked (GlcNAc...) asparagine glycosylation is found at N375 and N388. A helical transmembrane segment spans residues F430 to I453. The Cytoplasmic segment spans residues N454–G825. A Phosphoserine modification is found at S493. At Y516 the chain carries Phosphotyrosine. The Protein kinase domain occupies I538–G825. Residues L544–V552 and K572 each bind ATP. D679 functions as the Proton acceptor in the catalytic mechanism. Phosphotyrosine; by autocatalysis occurs at positions 705, 709, and 710.

This sequence belongs to the protein kinase superfamily. Tyr protein kinase family. Insulin receptor subfamily. In terms of assembly, exists in a dynamic equilibrium between monomeric (low affinity) and dimeric (high affinity) structures. Binds SH2B2. Interacts with SQSTM1 and KIDINS220. Interacts with PTPRS. Interacts with MAPK8IP3/JIP3. Ligand-mediated auto-phosphorylation. In terms of tissue distribution, isoform 2 expression is restricted to specific areas in adult brain. Isoform 3 transcripts are readily detected early during embryogenesis and are expressed predominantly in adult brain and gonads.

The protein resides in the membrane. The catalysed reaction is L-tyrosyl-[protein] + ATP = O-phospho-L-tyrosyl-[protein] + ADP + H(+). Functionally, receptor tyrosine kinase involved in nervous system and probably heart development. Upon binding of its ligand NTF3/neurotrophin-3, NTRK3 autophosphorylates and activates different signaling pathways, including the phosphatidylinositol 3-kinase/AKT and the MAPK pathways, that control cell survival and differentiation. The sequence is that of NT-3 growth factor receptor (Ntrk3) from Mus musculus (Mouse).